Consider the following 430-residue polypeptide: Palmitoyltransferase ZDHHC11 (430 aa).

The Cytoplasmic portion of the chain corresponds to 1–46; it reads MTNLNCFGRHRRRTAPHNATGSRSELVAPPIHSRINGWSSPLHSFQ. Residues 47–67 traverse the membrane as a helical segment; that stretch reads FIALLIFSFMAIVAFGIYVPL. Topologically, residues 68-76 are lumenal; it reads LPAPWSYAA. Residues 77–97 traverse the membrane as a helical segment; it reads YALIGSAFVLHLFSHVTAVTI. At 98 to 176 the chain is on the cytoplasmic side; sequence DPADVNVRRR…GGRNYWFFFT (79 aa). One can recognise a DHHC domain in the interval 129–179; that stretch reads LHCTLCEVDVSPKAKHCSTCNKCIADFDHHCKWLNNCVGGRNYWFFFTAVS. Catalysis depends on Cys-159, which acts as the S-palmitoyl cysteine intermediate. A helical membrane pass occupies residues 177–197; the sequence is AVSSAVIGVILLIPLVLFVFI. The Lumenal segment spans residues 198–234; the sequence is EHYVNPAVLRTAPQFQTVKGNGTWLVFLPVAPVETSS. A helical transmembrane segment spans residues 235-255; that stretch reads ISLLVVSFITALLSLAALLLL. At 256–430 the chain is on the cytoplasmic side; that stretch reads CHLLCFHIYL…QYLHFKQKMP (175 aa).

Belongs to the DHHC palmitoyltransferase family.

The protein resides in the endoplasmic reticulum membrane. The enzyme catalyses L-cysteinyl-[protein] + hexadecanoyl-CoA = S-hexadecanoyl-L-cysteinyl-[protein] + CoA. Its function is as follows. Endoplasmic reticulum-localized palmitoyltransferase that could catalyze the addition of palmitate onto protein substrates. The sequence is that of Palmitoyltransferase ZDHHC11 from Danio rerio (Zebrafish).